We begin with the raw amino-acid sequence, 354 residues long: NADH-ubiquinone oxidoreductase chain 1 (354 aa).

A run of 8 helical transmembrane segments spans residues 43-63 (LFWSLSFYVVVLLSVAYLTLF), 108-128 (PALFFLGPCFMLLHSFILWGC), 139-159 (FFWGGLYVLSVLSVGVYGVVL), 180-200 (VISYEVMLVFLYLCPFFVVGS), 211-231 (VSGCNGGVLFLVLPWWVFCVL), 264-284 (IFIAEYSNILFLSTLTSVLFL), 298-318 (LISSSVIGSFFSFMVVFLIVL), and 334-354 (LIWCQILPILMSCFALFLMII).

It belongs to the complex I subunit 1 family.

It is found in the mitochondrion inner membrane. It catalyses the reaction a ubiquinone + NADH + 5 H(+)(in) = a ubiquinol + NAD(+) + 4 H(+)(out). Core subunit of the mitochondrial membrane respiratory chain NADH dehydrogenase (Complex I) that is believed to belong to the minimal assembly required for catalysis. Complex I functions in the transfer of electrons from NADH to the respiratory chain. The immediate electron acceptor for the enzyme is believed to be ubiquinone. This chain is NADH-ubiquinone oxidoreductase chain 1 (ND1), found in Pecten maximus (King scallop).